We begin with the raw amino-acid sequence, 222 residues long: Disulfide bond formation protein D (222 aa).

The signal sequence occupies residues 1 to 36 (MKKKQQSSAKFAVILTVVVVVLLAAIVIINNKTEQG). Residues 37-220 (NDAVSGQPSI…IKETIEKELK (184 aa)) enclose the Thioredoxin domain. Cys69 and Cys72 are oxidised to a cystine.

The protein belongs to the thioredoxin family. DsbA subfamily.

It is found in the cell membrane. It localises to the membrane raft. Required for the stabilization, possibly via formation of a disulfide bond, of the obligatory competence protein ComGC. May be required for the stability of secreted proteins with disulfide bonds. Not required for sporulation. This chain is Disulfide bond formation protein D (bdbD), found in Bacillus subtilis (strain 168).